Reading from the N-terminus, the 579-residue chain is Nuclear receptor coactivator 5 (579 aa).

The residue at position 1 (Met1) is an N-acetylmethionine. Residues Met1–Ser77 are disordered. The transcription repression stretch occupies residues Met1–Pro158. The residue at position 3 (Thr3) is a Phosphothreonine. Residues Ser9, Ser21, Ser29, Ser34, Ser96, Ser116, Ser126, Ser143, and Ser151 each carry the phosphoserine modification. The span at Thr11 to Ser77 shows a compositional bias: basic and acidic residues. A disordered region spans residues Tyr148 to Arg172. Thr274 is modified (phosphothreonine). Positions Leu345–Leu349 match the LXXLL motif motif. Phosphoserine is present on residues Ser378 and Ser381. Disordered regions lie at residues Ser378 to Gln428 and Ala446 to Ser529. Composition is skewed to low complexity over residues Ser395–Thr420 and Ala446–Ser460. The interval Gly458–Tyr579 is transcription activation. A compositionally biased stretch (polar residues) spans Gln461–Pro485.

In terms of assembly, binds HTATIP2/TIP30. Interacts with YLPM1. Forms a complex with ILF2, ILF3, YLPM1, KHDRBS1, RBMX and PPP1CA.

Its subcellular location is the nucleus. Nuclear receptor coregulator that can have both coactivator and corepressor functions. Interacts with nuclear receptors for steroids (ESR1 and ESR2) independently of the steroid binding domain (AF-2) of the ESR receptors, and with the orphan nuclear receptor NR1D2. Involved in the coactivation of nuclear steroid receptors (ER) as well as the corepression of MYC in response to 17-beta-estradiol (E2). In Mus musculus (Mouse), this protein is Nuclear receptor coactivator 5 (Ncoa5).